The sequence spans 567 residues: Laccase-3 (567 aa).

The first 24 residues, 1–24 (MASSSSSRLLFLLSCSVLALLAGA), serve as a signal peptide directing secretion. Plastocyanin-like domains lie at 32-148 (IVQE…PREN) and 158-310 (REVP…YDCG). N78 is a glycosylation site (N-linked (GlcNAc...) asparagine). 4 residues coordinate Cu cation: H82, H84, H127, and H129. N-linked (GlcNAc...) asparagine glycans are attached at residues N148, N187, N203, N298, N330, N379, and N389. Positions 415–551 (DFPAYPPVQF…AMAFLVEDGY (137 aa)) constitute a Plastocyanin-like 3 domain. Cu cation-binding residues include H468, H471, H473, H530, C531, H532, and H536.

The protein belongs to the multicopper oxidase family. Cu cation serves as cofactor.

The protein localises to the secreted. It localises to the extracellular space. It is found in the apoplast. The catalysed reaction is 4 hydroquinone + O2 = 4 benzosemiquinone + 2 H2O. Functionally, lignin degradation and detoxification of lignin-derived products. This chain is Laccase-3 (LAC3), found in Oryza sativa subsp. japonica (Rice).